The chain runs to 525 residues: GMP synthase [glutamine-hydrolyzing] (525 aa).

The 190-residue stretch at 13 to 202 (TILVLDFGSQ…AVDLCHAKQN (190 aa)) folds into the Glutamine amidotransferase type-1 domain. The Nucleophile role is filled by cysteine 89. Residues histidine 176 and glutamate 178 contribute to the active site. The GMPS ATP-PPase domain maps to 203 to 400 (WTMKNFIGTE…LGISHELVWR (198 aa)). 231–237 (SGGVDST) is an ATP binding site. XMP is bound by residues arginine 304, aspartate 462, lysine 517, and glutamate 523.

As to quaternary structure, homodimer. Mg(2+) serves as cofactor.

It is found in the cytoplasm. It localises to the cytosol. It catalyses the reaction XMP + L-glutamine + ATP + H2O = GMP + L-glutamate + AMP + diphosphate + 2 H(+). It participates in purine metabolism; GMP biosynthesis; GMP from XMP (L-Gln route): step 1/1. Functionally, catalyzes the conversion of xanthine monophosphate (XMP) to GMP in the presence of glutamine and ATP through an adenyl-XMP intermediate. The chain is GMP synthase [glutamine-hydrolyzing] (GUA1) from Candida glabrata (strain ATCC 2001 / BCRC 20586 / JCM 3761 / NBRC 0622 / NRRL Y-65 / CBS 138) (Yeast).